We begin with the raw amino-acid sequence, 295 residues long: Pyridoxal 5'-phosphate synthase subunit PdxS (295 aa).

Asp-25 lines the D-ribose 5-phosphate pocket. The Schiff-base intermediate with D-ribose 5-phosphate role is filled by Lys-82. A D-ribose 5-phosphate-binding site is contributed by Gly-154. Residue Arg-166 participates in D-glyceraldehyde 3-phosphate binding. D-ribose 5-phosphate contacts are provided by residues Gly-215 and 236 to 237; that span reads GS.

This sequence belongs to the PdxS/SNZ family. In terms of assembly, in the presence of PdxT, forms a dodecamer of heterodimers.

The catalysed reaction is aldehydo-D-ribose 5-phosphate + D-glyceraldehyde 3-phosphate + L-glutamine = pyridoxal 5'-phosphate + L-glutamate + phosphate + 3 H2O + H(+). It participates in cofactor biosynthesis; pyridoxal 5'-phosphate biosynthesis. In terms of biological role, catalyzes the formation of pyridoxal 5'-phosphate from ribose 5-phosphate (RBP), glyceraldehyde 3-phosphate (G3P) and ammonia. The ammonia is provided by the PdxT subunit. Can also use ribulose 5-phosphate and dihydroxyacetone phosphate as substrates, resulting from enzyme-catalyzed isomerization of RBP and G3P, respectively. This chain is Pyridoxal 5'-phosphate synthase subunit PdxS, found in Staphylococcus epidermidis (strain ATCC 35984 / DSM 28319 / BCRC 17069 / CCUG 31568 / BM 3577 / RP62A).